The chain runs to 183 residues: DELTA-miturgitoxin-Cp1a (183 aa).

The signal sequence occupies residues 1–20 (MKFSLFFSVFFLAVLHACLS). The propeptide occupies 21-47 (ESEIDLEDEEHFMSSDSFLSEIQDESR). The short motif at 44-47 (DESR) is the Processing quadruplet motif element. 8 cysteine pairs are disulfide-bonded: Cys51–Cys66, Cys58–Cys75, Cys65–Cys88, Cys77–Cys86, Cys115–Cys130, Cys122–Cys139, Cys129–Cys157, and Cys141–Cys155. Domain repeat units follow at residues 51–77 (CIER…KCTC) and 115–141 (CVPK…QCKC). Positions 51–141 (CIERNKECTN…GGIFKYQCKC (91 aa)) are 2 X approximate repeats with cysteine pattern C-C-CC-C-C. Residues 164–177 (QAIEGALRIAKKLI) are predicted alpha-helix. Position 181 is a tryptophan amide (Trp181).

This sequence belongs to the neurotoxin 19 (CSTX) family. Double-CSTX subfamily. Post-translationally, cleavage of the propeptide depends on the processing quadruplet motif (XXXR, with at least one of X being E). In terms of tissue distribution, expressed by the venom gland.

The protein resides in the secreted. Its subcellular location is the target cell membrane. Functionally, spider venom toxin that exhibits cytolytic activity by forming an alpha-helix across the membrane. Lethal to insect larvae. Causes instant paralysis and death in the larvae of the flesh fly (S.carnaria) at doses of 20 ug/g, at doses of less than 10 ug/g causes reversible paralysis. Has cytolytic activity against insect Sf9 cells. Causes stable and irreversible depolarization of fly muscle fibers, leading to contracture at higher toxin concentrations. Destabilizes membranes. This Cheiracanthium punctorium (Yellow sac spider) protein is DELTA-miturgitoxin-Cp1a.